The following is a 1241-amino-acid chain: Putative urea carboxylase (1241 aa).

One can recognise a Biotin carboxylation domain in the interval 3–459 (ALKTLLIANR…LTKFLNNFEY (457 aa)). 2 residues coordinate ATP: K117 and E201. The region spanning 121–321 (RELATKAGVP…LVELMLRQAD (201 aa)) is the ATP-grasp domain. The 81-residue stretch at 1159–1239 (EELLKDPEIT…EAGKPLMLVR (81 aa)) folds into the Biotinyl-binding domain. K1202 carries the post-translational modification N6-biotinyllysine.

Biotin is required as a cofactor.

The catalysed reaction is urea + hydrogencarbonate + ATP = urea-1-carboxylate + ADP + phosphate + H(+). Its function is as follows. Involved in the utilization of lactams. Required for the conversion of exogenous 2-pyrrolidinone (gamma-butyrolactam) to endogenous gamma-amino-n-butyrate (GABA). In Emericella nidulans (strain FGSC A4 / ATCC 38163 / CBS 112.46 / NRRL 194 / M139) (Aspergillus nidulans), this protein is Putative urea carboxylase (lamA).